The chain runs to 765 residues: E3 ubiquitin-protein ligase SlrP (765 aa).

Positions 1–453 (MFNITNIQST…YQGPRVLFAM (453 aa)) are interaction with target proteins. 10 LRR repeats span residues 200–219 (QITT…ENLQ), 221–242 (NIKT…LPDT), 243–262 (IQEM…RLPS), 263–284 (ALQS…LPEE), 285–305 (LRYL…LPSE), 306–325 (ITHL…TLPP), 326–346 (GLKT…SLPP), 347–368 (ELQV…LPPT), 369–389 (ITTL…LPAA), and 390–410 (LQIM…LPHF). The linker stretch occupies residues 454–461 (GDFSIVRV). The interval 462 to 765 (TRPLHQAVQG…VSSLMSAYWR (304 aa)) is E3 ubiquitin-protein ligase catalytic domain. Positions 464-758 (PLHQAVQGWL…NILLKKEVSS (295 aa)) constitute an NEL domain. The active-site Glycyl thioester intermediate is cysteine 546.

Belongs to the LRR-containing bacterial E3 ligase family. In terms of assembly, interacts with host TXN. Post-translationally, ubiquitinated in the presence of host E1 ubiquitin-activating enzyme, E2 ubiquitin-conjugating enzyme and ubiquitin.

The protein resides in the secreted. It localises to the host cytoplasm. It carries out the reaction S-ubiquitinyl-[E2 ubiquitin-conjugating enzyme]-L-cysteine + [acceptor protein]-L-lysine = [E2 ubiquitin-conjugating enzyme]-L-cysteine + N(6)-ubiquitinyl-[acceptor protein]-L-lysine.. Its function is as follows. Effector proteins function to alter host cell physiology and promote bacterial survival in host tissues. This protein is an E3 ubiquitin ligase that interferes with host's ubiquitination pathway. Can ubiquitinate both ubiquitin and host TXN (thioredoxin). Leads to significant decrease of thioredoxin activity and increase of host cell death. This chain is E3 ubiquitin-protein ligase SlrP (slrP), found in Salmonella typhimurium (strain 14028s / SGSC 2262).